The sequence spans 1366 residues: Protein strawberry notch homolog 2 (1366 aa).

4 disordered regions span residues 1–24 (MLAVGPAMDRDYPQHEPPPAGSLL), 174–217 (QEQS…KQHP), 614–640 (STKRKRDRGAGSKRKRRPRGRGAKAPR), and 1324–1366 (HAGP…QAPL). Positions 15 to 24 (HEPPPAGSLL) are enriched in pro residues. The segment covering 182 to 194 (PEEEDEAEEEEAE) has biased composition (acidic residues). Basic residues predominate over residues 614–637 (STKRKRDRGAGSKRKRRPRGRGAK). Over residues 1333–1347 (LGEGAGAGGAAGGGP) the composition is skewed to gly residues.

It belongs to the SBNO family. As to quaternary structure, interacts with TAL1; this interaction inhibits TAL1 occupancy of the DCSTAMP promoter, leading to the activation of the DCSTAMP promoter by the transcription factor MITF. As to expression, detected in macrophages. IL10 regulates expression in a STAT3-dependent way.

Functionally, acts as a transcriptional coregulator, that can have both coactivator and corepressor functions. Inhibits the DCSTAMP-repressive activity of TAL1, hence enhancing the access of the transcription factor MITF to the DC-STAMP promoter in osteoclast. Plays a role in bone homeostasis; required as a positive regulator in TNFSF11//RANKL-mediated osteoclast fusion via a DCSTAMP-dependent pathway. May also be required in the regulation of osteoblast differentiation. Involved in the transcriptional corepression of NF-kappaB in macrophages. Plays a role as a regulator in the pro-inflammatory cascade. The protein is Protein strawberry notch homolog 2 (SBNO2) of Homo sapiens (Human).